The following is a 436-amino-acid chain: Methylenetetrahydrofolate--tRNA-(uracil-5-)-methyltransferase TrmFO (436 aa).

10–15 contacts FAD; the sequence is GAGLAG.

It belongs to the MnmG family. TrmFO subfamily. Requires FAD as cofactor.

It localises to the cytoplasm. The catalysed reaction is uridine(54) in tRNA + (6R)-5,10-methylene-5,6,7,8-tetrahydrofolate + NADH + H(+) = 5-methyluridine(54) in tRNA + (6S)-5,6,7,8-tetrahydrofolate + NAD(+). It catalyses the reaction uridine(54) in tRNA + (6R)-5,10-methylene-5,6,7,8-tetrahydrofolate + NADPH + H(+) = 5-methyluridine(54) in tRNA + (6S)-5,6,7,8-tetrahydrofolate + NADP(+). Catalyzes the folate-dependent formation of 5-methyl-uridine at position 54 (M-5-U54) in all tRNAs. The polypeptide is Methylenetetrahydrofolate--tRNA-(uracil-5-)-methyltransferase TrmFO (Exiguobacterium sp. (strain ATCC BAA-1283 / AT1b)).